The following is a 429-amino-acid chain: Adenylosuccinate synthetase (429 aa).

GTP contacts are provided by residues 12–18 (GDEGKGK) and 40–42 (GHT). Residue aspartate 13 is the Proton acceptor of the active site. The Mg(2+) site is built by aspartate 13 and glycine 40. Residues 13 to 16 (DEGK), 38 to 41 (NAGH), threonine 129, arginine 143, glutamine 223, threonine 238, and arginine 302 contribute to the IMP site. Histidine 41 serves as the catalytic Proton donor. 298-304 (TVTGRPR) is a binding site for substrate. Residues arginine 304, 330 to 332 (KLD), and 412 to 414 (STS) each bind GTP.

It belongs to the adenylosuccinate synthetase family. Homodimer. Mg(2+) is required as a cofactor.

It is found in the cytoplasm. The enzyme catalyses IMP + L-aspartate + GTP = N(6)-(1,2-dicarboxyethyl)-AMP + GDP + phosphate + 2 H(+). It participates in purine metabolism; AMP biosynthesis via de novo pathway; AMP from IMP: step 1/2. Plays an important role in the de novo pathway of purine nucleotide biosynthesis. Catalyzes the first committed step in the biosynthesis of AMP from IMP. The sequence is that of Adenylosuccinate synthetase from Paramagnetospirillum magneticum (strain ATCC 700264 / AMB-1) (Magnetospirillum magneticum).